A 382-amino-acid polypeptide reads, in one-letter code: GDP-mannose transporter (382 aa).

The Cytoplasmic portion of the chain corresponds to 1–40 (MADDKKTNEYTIEMDKLDHGNKDFEAPAPAVRPRGPPVAQ). A helical membrane pass occupies residues 41 to 61 (LANNPILPVLAYCGSSILMTV). Residues 62-71 (MNKYVLSGRD) lie on the Lumenal side of the membrane. The chain crosses the membrane as a helical span at residues 72 to 92 (FNLNFFLLCVQSIVCIVAIQT). The Cytoplasmic segment spans residues 93–110 (CKVSKLITYRDFNSDEAK). A helical membrane pass occupies residues 111-127 (KWFPITLLLIGMIYTGS). Residues 128-134 (KALQYLS) are Lumenal-facing. The helical transmembrane segment at 135–151 (IPVYTIFKNLTIILIAY) threads the bilayer. At 152 to 160 (GEVLWFGGS) the chain is on the cytoplasmic side. A helical membrane pass occupies residues 161–182 (VTGLTLFSFGLMVLSSIIAAWA). Residues 183–200 (DIKHAVESSGDATAKVST) lie on the Lumenal side of the membrane. Residues 201–221 (LNAGYIWMLINCLCTSSYVLG) form a helical membrane-spanning segment. Residues 222–233 (MRKRIKLTNFKD) are Cytoplasmic-facing. Residues 234 to 254 (FDTMFYNNLLSIPVLLVLTFL) form a helical membrane-spanning segment. Topologically, residues 255–274 (MEDWSSANIARNFPSTDRNG) are lumenal. A helical membrane pass occupies residues 275 to 295 (ILFAMILSGLSSVFISYTSAW). Residues 296 to 303 (CVRVTSST) are Cytoplasmic-facing. The chain crosses the membrane as a helical span at residues 304–324 (TYSMVGALNKLPIALSGLIFF). The Lumenal segment spans residues 325 to 327 (DAP). The chain crosses the membrane as a helical span at residues 328-348 (VTFPSVSAIVVGFISGIVYAV). The Cytoplasmic segment spans residues 349–382 (AKIKQSAKPKTGVLPMSNPPVSASSQSMRDSLRS). The interval 358-382 (KTGVLPMSNPPVSASSQSMRDSLRS) is disordered. The segment covering 367 to 382 (PPVSASSQSMRDSLRS) has biased composition (polar residues).

This sequence belongs to the TPT transporter family. SLC35D subfamily. As to quaternary structure, homooligomer.

It localises to the golgi apparatus membrane. The protein localises to the cytoplasmic vesicle membrane. The protein resides in the endoplasmic reticulum membrane. Involved in the import of GDP-mannose from the cytoplasm into the Golgi lumen. The chain is GDP-mannose transporter (gmt1) from Aspergillus fumigatus (strain CBS 144.89 / FGSC A1163 / CEA10) (Neosartorya fumigata).